The following is a 299-amino-acid chain: MKTKLIVVAGPTAVGKTALGIELAERFNGEIISGDSQQVYRQLNIGTAKATPEEQAAAVHHLIDVRDVDESYSAYDFVTEAQAAITDIVSRGKLPIIVGGTGLYLQSLLEGYHLGGKVDQNQVLAYRSELEQLSDQQLFEKIDSLGIEIKEINRRRAIRALELYRFSDNLENTETCYEPFIIGLDDERSLIYDRINTRVDKMVELGLLEEAKWLYDNFPEAQSARGIGYKELFPYFSGEQTLDEALEKLKQNTRRFAKRQLTWFRNRMTVSFYQISSPEYPENVIQDLAIFLNEEEGEK.

10 to 17 (GPTAVGKT) contributes to the ATP binding site. Position 12–17 (12–17 (TAVGKT)) interacts with substrate. The segment at 35 to 38 (DSQQ) is interaction with substrate tRNA.

It belongs to the IPP transferase family. In terms of assembly, monomer. Requires Mg(2+) as cofactor.

It carries out the reaction adenosine(37) in tRNA + dimethylallyl diphosphate = N(6)-dimethylallyladenosine(37) in tRNA + diphosphate. Functionally, catalyzes the transfer of a dimethylallyl group onto the adenine at position 37 in tRNAs that read codons beginning with uridine, leading to the formation of N6-(dimethylallyl)adenosine (i(6)A). This is tRNA dimethylallyltransferase from Streptococcus thermophilus (strain ATCC BAA-250 / LMG 18311).